We begin with the raw amino-acid sequence, 574 residues long: Membrane protein insertase YidC (574 aa).

6 helical membrane-spanning segments follow: residues 6-26 (VFLI…WGKE), 350-370 (VIDY…FWVL), 376-396 (FLHN…LVLY), 447-467 (GGCL…WVLV), 491-511 (FILP…TPTP), and 525-545 (PLVF…YWVV).

Belongs to the OXA1/ALB3/YidC family. Type 1 subfamily. In terms of assembly, interacts with the Sec translocase complex via SecD. Specifically interacts with transmembrane segments of nascent integral membrane proteins during membrane integration.

It localises to the cell inner membrane. Its function is as follows. Required for the insertion and/or proper folding and/or complex formation of integral membrane proteins into the membrane. Involved in integration of membrane proteins that insert both dependently and independently of the Sec translocase complex, as well as at least some lipoproteins. Aids folding of multispanning membrane proteins. The polypeptide is Membrane protein insertase YidC (Xanthomonas oryzae pv. oryzae (strain KACC10331 / KXO85)).